The following is a 535-amino-acid chain: L-aspartate oxidase (535 aa).

FAD is bound by residues 16–19 (SGAA), lysine 38, 45–52 (ATFYAQGG), and aspartate 223. The active-site Proton donor/acceptor is the arginine 290. FAD is bound by residues glutamate 375 and 391–392 (SL).

It belongs to the FAD-dependent oxidoreductase 2 family. NadB subfamily. The cofactor is FAD.

The protein localises to the cytoplasm. It catalyses the reaction L-aspartate + O2 = iminosuccinate + H2O2. It functions in the pathway cofactor biosynthesis; NAD(+) biosynthesis; iminoaspartate from L-aspartate (oxidase route): step 1/1. In terms of biological role, catalyzes the oxidation of L-aspartate to iminoaspartate, the first step in the de novo biosynthesis of NAD(+). This chain is L-aspartate oxidase (nadB), found in Vibrio cholerae serotype O1 (strain ATCC 39315 / El Tor Inaba N16961).